Consider the following 371-residue polypeptide: tRNA-specific 2-thiouridylase MnmA (371 aa).

ATP contacts are provided by residues 13-20 (GMSGGVDS) and Met39. The interaction with target base in tRNA stretch occupies residues 99-101 (NPD). The Nucleophile role is filled by Cys104. A disulfide bridge links Cys104 with Cys200. Position 128 (Gly128) interacts with ATP. The tract at residues 150-152 (KDQ) is interaction with tRNA. Residue Cys200 is the Cysteine persulfide intermediate of the active site. The segment at 308 to 309 (RY) is interaction with tRNA.

This sequence belongs to the MnmA/TRMU family.

The protein resides in the cytoplasm. It carries out the reaction S-sulfanyl-L-cysteinyl-[protein] + uridine(34) in tRNA + AH2 + ATP = 2-thiouridine(34) in tRNA + L-cysteinyl-[protein] + A + AMP + diphosphate + H(+). In terms of biological role, catalyzes the 2-thiolation of uridine at the wobble position (U34) of tRNA, leading to the formation of s(2)U34. In Bacillus thuringiensis (strain Al Hakam), this protein is tRNA-specific 2-thiouridylase MnmA.